The primary structure comprises 688 residues: Glycine--tRNA ligase beta subunit (688 aa).

Belongs to the class-II aminoacyl-tRNA synthetase family. Tetramer of two alpha and two beta subunits.

The protein localises to the cytoplasm. It carries out the reaction tRNA(Gly) + glycine + ATP = glycyl-tRNA(Gly) + AMP + diphosphate. The protein is Glycine--tRNA ligase beta subunit of Shewanella oneidensis (strain ATCC 700550 / JCM 31522 / CIP 106686 / LMG 19005 / NCIMB 14063 / MR-1).